A 161-amino-acid polypeptide reads, in one-letter code: GTP-dependent dephospho-CoA kinase (161 aa).

Positions 40, 41, 42, 59, 112, and 135 each coordinate GTP.

This sequence belongs to the GTP-dependent DPCK family.

The catalysed reaction is 3'-dephospho-CoA + GTP = GDP + CoA + H(+). The protein operates within cofactor biosynthesis; coenzyme A biosynthesis. Functionally, catalyzes the GTP-dependent phosphorylation of the 3'-hydroxyl group of dephosphocoenzyme A to form coenzyme A (CoA). The sequence is that of GTP-dependent dephospho-CoA kinase from Methanocorpusculum labreanum (strain ATCC 43576 / DSM 4855 / Z).